Here is a 453-residue protein sequence, read N- to C-terminus: Allantoinase (453 aa).

The Zn(2+) site is built by histidine 59, histidine 61, lysine 146, histidine 186, histidine 242, and aspartate 315. Lysine 146 carries the post-translational modification N6-carboxylysine.

This sequence belongs to the metallo-dependent hydrolases superfamily. Allantoinase family. Homotetramer. Zn(2+) is required as a cofactor. Carboxylation allows a single lysine to coordinate two zinc ions.

The enzyme catalyses (S)-allantoin + H2O = allantoate + H(+). Its pathway is nitrogen metabolism; (S)-allantoin degradation; allantoate from (S)-allantoin: step 1/1. Functionally, catalyzes the conversion of allantoin (5-ureidohydantoin) to allantoic acid by hydrolytic cleavage of the five-member hydantoin ring. This chain is Allantoinase, found in Salmonella paratyphi B (strain ATCC BAA-1250 / SPB7).